We begin with the raw amino-acid sequence, 420 residues long: Zinc finger protein 362 (420 aa).

3 disordered regions span residues 1–28 (MSRSSPSGKGHSRMAEPRFNNPYFWPPP), 54–80 (RPPHLPPTSASSQQPLLVPPAPAESSQ), and 115–155 (VTGL…SQSR). Positions 121 to 154 (STRTPSVSTSESSAGAGTGTGTSTPSTPTTTSQS) are enriched in low complexity. A Phosphothreonine modification is found at threonine 162. The tract at residues 178 to 202 (TIQGHGLLGPPKSERGRKKIKAENP) is disordered. Lysine 198 is covalently cross-linked (Glycyl lysine isopeptide (Lys-Gly) (interchain with G-Cter in SUMO2)). 6 C2H2-type zinc fingers span residues 227–249 (YRCKVCPLTFFTKSEMQIHSKSH), 255–277 (HKCPHCSKSFANASYLAQHLRIH), 283–305 (YHCSYCDKSFRQLSHLQQHTRIH), 311–335 (YKCPHPGCEKAFTQLSNLQSHQRQH), 341–363 (YKCPNCYRAYSDSASLQIHLSAH), and 371–393 (YCCSMCGRAYTSETYLMKHMSKH). Serine 404 is subject to Phosphoserine.

This sequence belongs to the krueppel C2H2-type zinc-finger protein family.

It localises to the nucleus. Functionally, may be involved in transcriptional regulation. The sequence is that of Zinc finger protein 362 (ZNF362) from Homo sapiens (Human).